The primary structure comprises 215 residues: Probable phosphoglycerate mutase GpmB (215 aa).

Residues 8 to 15, 21 to 22, R58, K60, 82 to 85, 104 to 105, and 151 to 152 contribute to the substrate site; these read RHGETQWN, QG, ELDM, RR, and GI. The active-site Tele-phosphohistidine intermediate is the H9. E82 functions as the Proton donor/acceptor in the catalytic mechanism.

This sequence belongs to the phosphoglycerate mutase family. GpmB subfamily.

It carries out the reaction (2R)-2-phosphoglycerate = (2R)-3-phosphoglycerate. The protein operates within carbohydrate degradation; glycolysis; pyruvate from D-glyceraldehyde 3-phosphate: step 3/5. The sequence is that of Probable phosphoglycerate mutase GpmB from Salmonella agona (strain SL483).